Here is a 384-residue protein sequence, read N- to C-terminus: Sialyltransferase-like protein 3 (384 aa).

Residues 1–5 (MKRRH) lie on the Cytoplasmic side of the membrane. The helical; Signal-anchor for type II membrane protein transmembrane segment at 6 to 26 (WSHPSCGLLLLVAVFCLLLVF) threads the bilayer. At 27–384 (RCSQLRHSGD…FRLPPVSFYR (358 aa)) the chain is on the lumenal side. Asn-241 carries N-linked (GlcNAc...) asparagine glycosylation.

It belongs to the glycosyltransferase 29 family.

The protein resides in the golgi apparatus membrane. Possesses sialyltransferase-like activity in vitro. Transfers sialic acid to the glycoprotein asialofetuin. The transferred sialic acid is linked to galactose of Gal-beta-1,3-GalNAc through alpha-2,6-linkage. The chain is Sialyltransferase-like protein 3 from Oryza sativa subsp. japonica (Rice).